Reading from the N-terminus, the 1395-residue chain is DNA-directed RNA polymerase subunit beta' (1395 aa).

Cysteine 70, cysteine 72, cysteine 85, and cysteine 88 together coordinate Zn(2+). Residues aspartate 460, aspartate 462, and aspartate 464 each coordinate Mg(2+). Zn(2+) is bound by residues cysteine 814, cysteine 888, cysteine 895, and cysteine 898.

It belongs to the RNA polymerase beta' chain family. In terms of assembly, the RNAP catalytic core consists of 2 alpha, 1 beta, 1 beta' and 1 omega subunit. When a sigma factor is associated with the core the holoenzyme is formed, which can initiate transcription. Requires Mg(2+) as cofactor. Zn(2+) serves as cofactor.

It carries out the reaction RNA(n) + a ribonucleoside 5'-triphosphate = RNA(n+1) + diphosphate. In terms of biological role, DNA-dependent RNA polymerase catalyzes the transcription of DNA into RNA using the four ribonucleoside triphosphates as substrates. This is DNA-directed RNA polymerase subunit beta' from Pseudoalteromonas atlantica (strain T6c / ATCC BAA-1087).